Here is a 63-residue protein sequence, read N- to C-terminus: Non-structural protein 3b (63 aa).

In Avian infectious bronchitis virus (strain UK/183/66) (IBV), this protein is Non-structural protein 3b.